The sequence spans 347 residues: Selenide, water dikinase (347 aa).

The active site involves cysteine 17. ATP is bound by residues lysine 20 and 48 to 50 (TRD). Aspartate 51 provides a ligand contact to Mg(2+). ATP is bound by residues aspartate 68, aspartate 91, and 139 to 141 (GHS). Aspartate 91 serves as a coordination point for Mg(2+). Aspartate 227 contributes to the Mg(2+) binding site.

This sequence belongs to the selenophosphate synthase 1 family. Class I subfamily. As to quaternary structure, homodimer. Mg(2+) is required as a cofactor.

The enzyme catalyses hydrogenselenide + ATP + H2O = selenophosphate + AMP + phosphate + 2 H(+). Synthesizes selenophosphate from selenide and ATP. In Escherichia coli O139:H28 (strain E24377A / ETEC), this protein is Selenide, water dikinase.